The following is an 848-amino-acid chain: Dolabradiene synthase KSL4, chloroplastic (848 aa).

The transit peptide at Met1–His64 directs the protein to the chloroplast. The interval Gln148–Leu168 is disordered. Mg(2+) is bound by residues Asp597, Asp601, Asn742, Ser746, and Glu750. Residues Asp597–Asp601 carry the DDXXD motif motif.

The protein belongs to the terpene synthase family. Mg(2+) serves as cofactor.

Its subcellular location is the plastid. It localises to the chloroplast. It catalyses the reaction ent-copalyl diphosphate = dolabradiene + diphosphate. In terms of biological role, involved in the production of antifungal dolabralexin phytoalexins in response to biotic and abiotic stresses. In response to fungal infection and in associtation with AN2, is involved in the production dolabradiene, a type of antifungal phytoalexin. Converts ent-copalyl disphosphate (ent-CPP) to dolabradiene. This Zea mays (Maize) protein is Dolabradiene synthase KSL4, chloroplastic.